Here is a 442-residue protein sequence, read N- to C-terminus: UPF0489 protein C5orf22 (442 aa).

The segment at 175–210 is disordered; sequence SSAKKPKLALEDSENTASTNCDSSSEGLEKDTATQR. A compositionally biased stretch (polar residues) spans 189–200; the sequence is NTASTNCDSSSE.

It belongs to the UPF0489 family.

This Homo sapiens (Human) protein is UPF0489 protein C5orf22 (C5orf22).